The primary structure comprises 429 residues: Histidine--tRNA ligase (429 aa).

The protein belongs to the class-II aminoacyl-tRNA synthetase family. Homodimer.

It is found in the cytoplasm. The catalysed reaction is tRNA(His) + L-histidine + ATP = L-histidyl-tRNA(His) + AMP + diphosphate + H(+). The chain is Histidine--tRNA ligase from Pseudomonas fluorescens (strain Pf0-1).